A 140-amino-acid polypeptide reads, in one-letter code: Nucleoside diphosphate kinase (140 aa).

ATP-binding residues include K11, F59, R87, T93, R104, and N114. H117 (pros-phosphohistidine intermediate) is an active-site residue.

Belongs to the NDK family. Homotetramer. It depends on Mg(2+) as a cofactor.

It localises to the cytoplasm. The catalysed reaction is a 2'-deoxyribonucleoside 5'-diphosphate + ATP = a 2'-deoxyribonucleoside 5'-triphosphate + ADP. It catalyses the reaction a ribonucleoside 5'-diphosphate + ATP = a ribonucleoside 5'-triphosphate + ADP. Functionally, major role in the synthesis of nucleoside triphosphates other than ATP. The ATP gamma phosphate is transferred to the NDP beta phosphate via a ping-pong mechanism, using a phosphorylated active-site intermediate. The protein is Nucleoside diphosphate kinase of Hyphomonas neptunium (strain ATCC 15444).